A 473-amino-acid polypeptide reads, in one-letter code: FAD-dependent monooxygeanse terM (473 aa).

Positions 1-22 (MSENFKVLIIGGSVAGLTLALC) are cleaved as a signal peptide. The FAD site is built by glutamate 34, glycine 48, arginine 107, aspartate 303, and alanine 316. A helical membrane pass occupies residues 441-461 (VLYLICGALLAWWASGLVWHF).

The protein belongs to the paxM FAD-dependent monooxygenase family. FAD serves as cofactor.

It localises to the membrane. It functions in the pathway secondary metabolite biosynthesis. In terms of biological role, FAD-dependent monooxygeanse; part of the gene cluster that mediates the biosynthesis of terpendoles, indole-diterpene (IDT) mycotoxins including terpendole I, terpendole K, terpendole C, as well as the kinesin Eg5 inhibitor terpendole E. Terpendoles biosynthesis begins with the synthesis of geranylgeranyl diphosphate (GGPP) by a yet unidentified GGPP synthase. Condensation of indole-3-glycerol phosphate with GGPP by the prenyltransferase terC then forms 3-geranylgeranylindole (3-GGI), followed by epoxidation and cyclization of this intermediate (by the FAD-dependent monooxygeanse terM and the terpene cyclase terB) to form paspaline. The cytochrome monooxygenase terQ then hydroxylates paspalline at C-11 to yield terpendole E. The cytochrome monooxygenase terP converts terpendole E to 13-desoxyterpendole I, and terQ converts 13-desoxyterpendole I into terpendole I. TerF and terK are required for conversion of terpendole I to terpendole C which is further converted to terpendole K. This chain is FAD-dependent monooxygeanse terM, found in Tolypocladium album (Soil fungus).